We begin with the raw amino-acid sequence, 113 residues long: Putative pterin-4-alpha-carbinolamine dehydratase (113 aa).

The protein belongs to the pterin-4-alpha-carbinolamine dehydratase family.

It carries out the reaction (4aS,6R)-4a-hydroxy-L-erythro-5,6,7,8-tetrahydrobiopterin = (6R)-L-erythro-6,7-dihydrobiopterin + H2O. The chain is Putative pterin-4-alpha-carbinolamine dehydratase from Chlorobium limicola (strain DSM 245 / NBRC 103803 / 6330).